We begin with the raw amino-acid sequence, 333 residues long: Transcription factor MYB36 (333 aa).

2 HTH myb-type domains span residues 9–62 (KANV…LNYL) and 63–117 (RPNI…KKKL). 2 DNA-binding regions (H-T-H motif) span residues 38–62 (WIAL…LNYL) and 90–113 (WSII…NTKL). Residues 119-150 (GRQKQMNRQDSITDSTENNLSNNNNNKSPQNL) form a disordered region. Over residues 122-135 (KQMNRQDSITDSTE) the composition is skewed to polar residues. A compositionally biased stretch (low complexity) spans 136–150 (NNLSNNNNNKSPQNL).

As to expression, expressed in leaves, roots (endodermis-specific) and seedlings.

The protein localises to the nucleus. Transcription factors that activates genes required for endodermal differentiation but represses genes involved in proliferative divisions, thus regulating the transition from proliferation to differentiation in root endodermis. Required for Casparian strip formation by positively regulating the expression of the Casparian strip genes CASP1, PER64 and ESB1 and other endodermis-specific genes, thus triggering correct localized lignin biosynthesis in root endodermis and subsequently regulating global ion homeostasis. The protein is Transcription factor MYB36 of Arabidopsis thaliana (Mouse-ear cress).